A 200-amino-acid polypeptide reads, in one-letter code: Proteasome subunit beta 2 (200 aa).

The propeptide at 1-7 (METKKTG) is removed in mature form; by autocatalysis. The active-site Nucleophile is Thr8.

It belongs to the peptidase T1B family. The 20S proteasome core is composed of 14 alpha and 14 beta subunits that assemble into four stacked heptameric rings, resulting in a barrel-shaped structure. The two inner rings, each composed of seven catalytic beta subunits, are sandwiched by two outer rings, each composed of seven alpha subunits. The catalytic chamber with the active sites is on the inside of the barrel. Has a gated structure, the ends of the cylinder being occluded by the N-termini of the alpha-subunits. Is capped at one or both ends by the proteasome regulatory ATPase, PAN.

It localises to the cytoplasm. It carries out the reaction Cleavage of peptide bonds with very broad specificity.. With respect to regulation, the formation of the proteasomal ATPase PAN-20S proteasome complex, via the docking of the C-termini of PAN into the intersubunit pockets in the alpha-rings, triggers opening of the gate for substrate entry. Interconversion between the open-gate and close-gate conformations leads to a dynamic regulation of the 20S proteasome proteolysis activity. Its function is as follows. Component of the proteasome core, a large protease complex with broad specificity involved in protein degradation. The protein is Proteasome subunit beta 2 of Thermococcus onnurineus (strain NA1).